The chain runs to 382 residues: Alpha-2B adrenergic receptor (382 aa).

Residues 1–25 traverse the membrane as a helical segment; sequence AIAAVITFLILFTIFGNALVILAVL. Residues 26 to 36 are Cytoplasmic-facing; it reads TSRSLRAPQNL. The helical transmembrane segment at 37-62 threads the bilayer; that stretch reads FLVSLAAADILVATLIIPFSLANELL. Residues 63 to 72 are Extracellular-facing; that stretch reads GYWYFRHTWC. A disulfide bridge connects residues cysteine 72 and cysteine 151. Residues 73–95 traverse the membrane as a helical segment; the sequence is EVYLALDVLFCTSSIVHLCAISL. At 96 to 117 the chain is on the cytoplasmic side; it reads DRYWSVSRALEYNSKRTPRRIK. A helical membrane pass occupies residues 118 to 140; the sequence is GIILTVWLIAAFISLPPLIYKGD. Residues 141–156 lie on the Extracellular side of the membrane; it reads KGKKPGGRPQCKLNEE. A helical membrane pass occupies residues 157-180; the sequence is AWYILSSSIGSFFAPCLIMILVYL. The Cytoplasmic portion of the chain corresponds to 181 to 346; sequence RIYLIAKRRN…MNREKRFTFV (166 aa). The tract at residues 192–305 is disordered; the sequence is QGPHGKQAPG…QGTPNFQPSQ (114 aa). A compositionally biased stretch (acidic residues) spans 271 to 284; it reads EEEEEEEEEEEEEC. The segment covering 291–305 has biased composition (polar residues); sequence TSSSLQGTPNFQPSQ. A helical membrane pass occupies residues 347 to 370; it reads LAVVIGVFVLCWFPFFFSYSLGAI. The Extracellular portion of the chain corresponds to 371-379; the sequence is CPQHCKVPH. A helical membrane pass occupies residues 380–382; that stretch reads GLF.

The protein belongs to the G-protein coupled receptor 1 family. Adrenergic receptor subfamily. ADRA2B sub-subfamily. Interacts with RAB26. Interacts with PPP1R9B. Interacts with GGA1, GGA2 and GGA3.

The protein resides in the cell membrane. Its function is as follows. Alpha-2 adrenergic receptors mediate the catecholamine-induced inhibition of adenylate cyclase through the action of G proteins. The chain is Alpha-2B adrenergic receptor (ADRA2B) from Didelphis virginiana (North American opossum).